Reading from the N-terminus, the 156-residue chain is Cyanate hydratase (156 aa).

Residues arginine 96, glutamate 99, and serine 122 contribute to the active site.

Belongs to the cyanase family.

The enzyme catalyses cyanate + hydrogencarbonate + 3 H(+) = NH4(+) + 2 CO2. Functionally, catalyzes the reaction of cyanate with bicarbonate to produce ammonia and carbon dioxide. The sequence is that of Cyanate hydratase from Photorhabdus laumondii subsp. laumondii (strain DSM 15139 / CIP 105565 / TT01) (Photorhabdus luminescens subsp. laumondii).